The primary structure comprises 356 residues: Branched-chain-amino-acid aminotransferase 6 (356 aa).

K199 is modified (N6-(pyridoxal phosphate)lysine).

Belongs to the class-IV pyridoxal-phosphate-dependent aminotransferase family. The cofactor is pyridoxal 5'-phosphate.

The protein localises to the cytoplasm. It carries out the reaction L-leucine + 2-oxoglutarate = 4-methyl-2-oxopentanoate + L-glutamate. The enzyme catalyses L-isoleucine + 2-oxoglutarate = (S)-3-methyl-2-oxopentanoate + L-glutamate. It catalyses the reaction L-valine + 2-oxoglutarate = 3-methyl-2-oxobutanoate + L-glutamate. The protein operates within amino-acid biosynthesis; L-isoleucine biosynthesis; L-isoleucine from 2-oxobutanoate: step 4/4. It participates in amino-acid biosynthesis; L-leucine biosynthesis; L-leucine from 3-methyl-2-oxobutanoate: step 4/4. Its pathway is amino-acid biosynthesis; L-valine biosynthesis; L-valine from pyruvate: step 4/4. Converts 2-oxo acids to branched-chain amino acids. Acts on leucine, isoleucine and valine. The chain is Branched-chain-amino-acid aminotransferase 6 (BCAT6) from Arabidopsis thaliana (Mouse-ear cress).